Here is a 313-residue protein sequence, read N- to C-terminus: Formimidoylglutamase (313 aa).

The Mn(2+) site is built by His-130, Asp-155, His-157, Asp-159, Asp-241, and Asp-243.

The protein belongs to the arginase family. Mn(2+) serves as cofactor.

The catalysed reaction is N-formimidoyl-L-glutamate + H2O = formamide + L-glutamate. The protein operates within amino-acid degradation; L-histidine degradation into L-glutamate; L-glutamate from N-formimidoyl-L-glutamate (hydrolase route): step 1/1. In terms of biological role, catalyzes the conversion of N-formimidoyl-L-glutamate to L-glutamate and formamide. The protein is Formimidoylglutamase of Salmonella arizonae (strain ATCC BAA-731 / CDC346-86 / RSK2980).